The sequence spans 202 residues: FMN-dependent NADH:quinone oxidoreductase (202 aa).

Residues serine 12 and 21-23 (SFS) contribute to the FMN site.

It belongs to the azoreductase type 1 family. Homodimer. It depends on FMN as a cofactor.

It catalyses the reaction 2 a quinone + NADH + H(+) = 2 a 1,4-benzosemiquinone + NAD(+). It carries out the reaction N,N-dimethyl-1,4-phenylenediamine + anthranilate + 2 NAD(+) = 2-(4-dimethylaminophenyl)diazenylbenzoate + 2 NADH + 2 H(+). Its function is as follows. Quinone reductase that provides resistance to thiol-specific stress caused by electrophilic quinones. In terms of biological role, also exhibits azoreductase activity. Catalyzes the reductive cleavage of the azo bond in aromatic azo compounds to the corresponding amines. The protein is FMN-dependent NADH:quinone oxidoreductase of Mycoplasma mobile (strain ATCC 43663 / 163K / NCTC 11711) (Mesomycoplasma mobile).